We begin with the raw amino-acid sequence, 2364 residues long: Cytotoxin-L (2364 aa).

The segment at 1–91 is four-helical bundle; sequence MNLVNKAQLQ…EVLELKNNSL (91 aa). Positions 96 to 468 constitute a GT44 domain; the sequence is KNLHFIWIGG…APDVRSTINL (373 aa). Residues 96-468 are glucosyltransferase region; sequence KNLHFIWIGG…APDVRSTINL (373 aa). UDP-alpha-D-glucose is bound by residues 101–103, Asn-139, 265–270, and 286–288; these read IWI, LAAASD, and DVD. Residues Asp-288, Glu-515, and Ser-518 each contribute to the Mg(2+) site. UDP-alpha-D-glucose is bound at residue 518 to 520; sequence SLW. Residues 544 to 799 form an autoprocessing region region; sequence GEDDNLDFAQ…KSKYLHELST (256 aa). The Zn(2+) site is built by Glu-545 and Asp-546. The region spanning 567–774 is the Peptidase C80 domain; that stretch reads LSSMKTRNKE…EESIIKDISS (208 aa). 1D-myo-inositol hexakisphosphate-binding residues include Tyr-577, Lys-600, and Lys-647. His-653 provides a ligand contact to Zn(2+). His-653 serves as the catalytic For protease activity. The Nucleophile; for protease activity role is filled by Cys-698. His-757 provides a ligand contact to Zn(2+). 1D-myo-inositol hexakisphosphate contacts are provided by Lys-764, Lys-775, and Lys-792. Positions 800–1500 are translocation region; sequence LLQEIRNNAN…ESIIRNIYMP (701 aa). Interaction with host SEMA6A and SEMA6B regions lie at residues 1433–1438, 1466–1471, 1484–1495, 1504–1511, and 1596–1601; these read CMKLIE, DNETKY, FTAEFSNESIIR, NLFIYSSK, and YNNLDP. Cell wall-binding repeat units follow at residues 1813–1832, 1833–1852, 1854–1873, 1876–1895, 1926–1945, 1946–1965, 1967–1986, 1987–2006, 2007–2026, 2057–2076, 2077–2097, 2099–2118, 2119–2138, 2139–2158, 2209–2224, 2227–2249, 2250–2269, 2270–2289, 2320–2339, and 2340–2359; these read EFGL…FGNM, VSGL…PKNN, ITGF…TKSG, SIGE…QGIL, FIGK…NYRA, AVEW…KTGE, LKGL…NGIM, QTGF…DGVM, QVGY…NGER, YNGI…SNTA, VVGW…NRAE, CIGL…NGIR, QLGF…SGKI, ELGY…SGLV, ETGW…YFDP, KKAY…NGIM, RTGL…DGKM, QFGY…DGKM, YTGW…EYIA, and ATGS…DTAE. The interval 1835 to 2364 is receptor-binding (CROPS) region; the sequence is GLIYINDSLY…PDTAELVVSE (530 aa).

It belongs to the clostridial glucosylating toxin (LCGT) family. Homomultimer; forms an inactive homomultimer at pH 8, which dissociates at pH 4, leading to cytotoxicity. Interacts with host SEMA6A; interaction promotes toxin entry into host cell. Interacts with host SEMA6B; interaction promotes toxin entry into host cell. Zn(2+) is required as a cofactor. Mn(2+) serves as cofactor. It depends on Mg(2+) as a cofactor. Post-translationally, undergoes autocatalytic cleavage to release the N-terminal part (Glucosyltransferase TcsL), which constitutes the active part of the toxin, in the host cytosol. 1D-myo-inositol hexakisphosphate-binding (InsP6) activates the peptidase C80 domain and promotes autoprocessing.

The protein localises to the secreted. Its subcellular location is the host endosome membrane. It localises to the host cytoplasm. It is found in the host cytosol. The protein resides in the host cell membrane. It carries out the reaction L-threonyl-[protein] + UDP-alpha-D-glucose = 3-O-(alpha-D-glucosyl)-L-threonyl-[protein] + UDP + H(+). Protease activity is activated upon binding to 1D-myo-inositol hexakisphosphate (InsP6), which induces conformational reorganization. Precursor of a cytotoxin that targets the vascular endothelium, inducing an anti-inflammatory effect and resulting in lethal toxic shock syndrome. TcsL constitutes the main toxin that mediates the pathology of P.sordellii infection, an anaerobic Gram-positive bacterium found in soil and in the gastrointestinal and vaginal tracts of animals and humans; although the majority of carriers are asymptomatic, pathogenic P.sordellii infections arise rapidly and are highly lethal. This form constitutes the precursor of the toxin: it enters into host cells and mediates autoprocessing to release the active toxin (Glucosyltransferase TcsL) into the host cytosol. Targets vascular endothelium by binding to the semaphorin proteins SEMA6A and SEMA6B, and enters host cells via clathrin-mediated endocytosis. Once entered into host cells, acidification in the endosome promotes the membrane insertion of the translocation region and formation of a pore, leading to translocation of the GT44 and peptidase C80 domains across the endosomal membrane. This activates the peptidase C80 domain and autocatalytic processing, releasing the N-terminal part (Glucosyltransferase TcsL), which constitutes the active part of the toxin, in the cytosol. In terms of biological role, active form of the toxin, which is released into the host cytosol following autoprocessing and inactivates small GTPases. Acts by mediating monoglucosylation of small GTPases of the Ras (H-Ras/HRAS, K-Ras/KRAS, N-Ras/NRAS and Ral/RALA) family in host cells at the conserved threonine residue located in the switch I region ('Thr-37/35'), using UDP-alpha-D-glucose as the sugar donor. Also able to catalyze monoglucosylation of some members of the Rho family (Rac1 and Rap2A), but with less efficiency than with Ras proteins. Monoglucosylation of host small GTPases completely prevents the recognition of the downstream effector, blocking the GTPases in their inactive form and leading to apoptosis. Induces an anti-inflammatory effect, mainly by inactivating Ras proteins which results in blockage of the cell cycle and killing of immune cells. The absence or moderate local inflammatory response allows C.sordellii spreading in deep tissues, production of toxin which is released in the general circulation and causes a toxic shock syndrome. The polypeptide is Cytotoxin-L (Paraclostridium sordellii (Clostridium sordellii)).